Reading from the N-terminus, the 358-residue chain is Reverse gyrase subunit A (358 aa).

The Topo IA-type catalytic domain maps to 1–351 (MNATLRIRNR…KLYLELERVV (351 aa)). Residue Tyr-78 is the O-(5'-phospho-DNA)-tyrosine intermediate of the active site.

Belongs to the type IA topoisomerase family. In terms of assembly, heterodimer of an RgyrA and RgyrB subunit. The topoisomerase domain is shared between the two subunits. Requires Mg(2+) as cofactor.

The protein localises to the cytoplasm. Its function is as follows. Modifies the topological state of DNA by introducing positive supercoils in an ATP-dependent process; dATP also allows positive supercoiling. Increases the linking number in steps of +1. Only this subunit binds DNA, in isolation it does not hydrolyze ATP. Hydrolyzes ATP only in the presence of DNA. Transiently cleaves a single DNA strand and remains covalently bound to the 5' DNA end probably through a tyrosine residue. It changes linking number in steps of one, and nicks DNA preferentially at 5'-CNNN | 3'-sites with a strong preference for 4 pyrimidine residues. There are about 1000 heterodimers per cell. May be involved in rewinding the DNA strands in the regions of the chromosome that have opened up to allow transcription or replication. Functionally, reverse gyrase activity is reconstituted after incubation at 80 degrees Celsius for 5 minutes, positive supercoiling requires ATP and Mg(2+). In the presence of ATP it binds and nicks substrate but does not make closed product. The chain is Reverse gyrase subunit A from Methanopyrus kandleri (strain AV19 / DSM 6324 / JCM 9639 / NBRC 100938).